The following is a 337-amino-acid chain: Phosphate acyltransferase (337 aa).

This sequence belongs to the PlsX family. In terms of assembly, homodimer. Probably interacts with PlsY.

The protein resides in the cytoplasm. It carries out the reaction a fatty acyl-[ACP] + phosphate = an acyl phosphate + holo-[ACP]. Its pathway is lipid metabolism; phospholipid metabolism. Catalyzes the reversible formation of acyl-phosphate (acyl-PO(4)) from acyl-[acyl-carrier-protein] (acyl-ACP). This enzyme utilizes acyl-ACP as fatty acyl donor, but not acyl-CoA. The chain is Phosphate acyltransferase from Moritella marina (Vibrio marinus).